A 37-amino-acid polypeptide reads, in one-letter code: Large ribosomal subunit protein bL36 (37 aa).

This sequence belongs to the bacterial ribosomal protein bL36 family.

The protein is Large ribosomal subunit protein bL36 of Marinobacter nauticus (strain ATCC 700491 / DSM 11845 / VT8) (Marinobacter aquaeolei).